The sequence spans 588 residues: Probable metalloprotease ARX1 (588 aa).

Belongs to the peptidase M24 family. In terms of assembly, component of the nucleoplasmic and cytoplasmic pre-60S ribosomal particles.

It is found in the cytoplasm. The protein localises to the nucleus. Probable metalloprotease involved in proper assembly of pre-ribosomal particles during the biogenesis of the 60S ribosomal subunit. Accompanies the pre-60S particles to the cytoplasm. The polypeptide is Probable metalloprotease ARX1 (ARX1) (Candida glabrata (strain ATCC 2001 / BCRC 20586 / JCM 3761 / NBRC 0622 / NRRL Y-65 / CBS 138) (Yeast)).